A 71-amino-acid polypeptide reads, in one-letter code: Large ribosomal subunit protein bL31 (71 aa).

4 residues coordinate Zn(2+): Cys-16, Cys-18, Cys-36, and Cys-39.

Belongs to the bacterial ribosomal protein bL31 family. Type A subfamily. As to quaternary structure, part of the 50S ribosomal subunit. It depends on Zn(2+) as a cofactor.

Binds the 23S rRNA. The sequence is that of Large ribosomal subunit protein bL31 from Petrotoga mobilis (strain DSM 10674 / SJ95).